A 619-amino-acid chain; its full sequence is Probable ATP-dependent RNA helicase DDX59 (619 aa).

Lysine 26 participates in a covalent cross-link: Glycyl lysine isopeptide (Lys-Gly) (interchain with G-Cter in SUMO2). Positions 57 to 98 (SESCPFPSPGGQLAEVHSVSPEQGAKDSHPSEEPVKSFSKTQ) are disordered. Phosphoserine is present on residues serine 64 and serine 76. Positions 80-91 (GAKDSHPSEEPV) are enriched in basic and acidic residues. The HIT-type zinc finger occupies 104 to 133 (GEPICVVCGRYGEYICDKTDEDVCSLECKA). The disordered stretch occupies residues 142–161 (KEEKSKLSNPQKADSEPESP). A phosphoserine mark is found at serine 156 and serine 160. The short motif at 203-231 (IDFEHCSLPEVLNHNLKKSGYEVPTPIQM) is the Q motif element. Residues 234 to 405 (IPVGLLGRDI…SQLLHNPVRI (172 aa)) form the Helicase ATP-binding domain. An ATP-binding site is contributed by 247 to 254 (ADTGSGKT). The short motif at 353–356 (DEAD) is the DEAD box element. One can recognise a Helicase C-terminal domain in the interval 416-579 (NVRQIILWVE…ILPPQLLNSP (164 aa)).

The protein belongs to the DEAD box helicase family. DDX59 subfamily. In terms of assembly, interacts (via HIT-type zinc finger) with the RUVBL1/RUVBL2 complex in the presence of ADP. As to expression, expressed in fibroblasts (at protein level).

It localises to the cytoplasm. Its subcellular location is the nucleus. The catalysed reaction is ATP + H2O = ADP + phosphate + H(+). The polypeptide is Probable ATP-dependent RNA helicase DDX59 (DDX59) (Homo sapiens (Human)).